Here is a 643-residue protein sequence, read N- to C-terminus: Phosphomethylpyrimidine synthase (643 aa).

Residues Asn248, Met277, Tyr306, His342, 362-364 (SRG), 403-406 (DGLR), and Glu442 contribute to the substrate site. His446 provides a ligand contact to Zn(2+). A substrate-binding site is contributed by Tyr469. His510 contributes to the Zn(2+) binding site. [4Fe-4S] cluster contacts are provided by Cys590, Cys593, and Cys598.

This sequence belongs to the ThiC family. As to quaternary structure, homodimer. It depends on [4Fe-4S] cluster as a cofactor.

It catalyses the reaction 5-amino-1-(5-phospho-beta-D-ribosyl)imidazole + S-adenosyl-L-methionine = 4-amino-2-methyl-5-(phosphooxymethyl)pyrimidine + CO + 5'-deoxyadenosine + formate + L-methionine + 3 H(+). It participates in cofactor biosynthesis; thiamine diphosphate biosynthesis. Functionally, catalyzes the synthesis of the hydroxymethylpyrimidine phosphate (HMP-P) moiety of thiamine from aminoimidazole ribotide (AIR) in a radical S-adenosyl-L-methionine (SAM)-dependent reaction. The protein is Phosphomethylpyrimidine synthase of Paraburkholderia phytofirmans (strain DSM 17436 / LMG 22146 / PsJN) (Burkholderia phytofirmans).